The chain runs to 299 residues: Triplex capsid protein 1 (299 aa).

Belongs to the herpesviridae TRX1 protein family. In terms of assembly, interacts with TRX2, MCP and capsid vertex component 2/CVC2.

It is found in the virion. The protein localises to the host nucleus. In terms of biological role, structural component of the T=16 icosahedral capsid. The capsid is composed of pentamers and hexamers of major capsid protein/MCP, which are linked together by heterotrimers called triplexes. These triplexes are formed by a single molecule of triplex protein 1/TRX1 and two copies of triplex protein 2/TRX2. Additionally, TRX1 is required for efficient transport of TRX2 to the nucleus, which is the site of capsid assembly. The protein is Triplex capsid protein 1 of Homo sapiens (Human).